Consider the following 342-residue polypeptide: Cell division protein FtsQ (342 aa).

At 1 to 80 (MDGAGSLTRS…ALVERYLPRR (80 aa)) the chain is on the cytoplasmic side. The chain crosses the membrane as a helical span at residues 81-99 (VGISMTVLLLIGSCGFGIV). At 100-342 (KGGHLQDFVT…KKKKKAGDAA (243 aa)) the chain is on the periplasmic side. The region spanning 124-192 (FRITSVVING…GQLMIELTER (69 aa)) is the POTRA domain.

It belongs to the FtsQ/DivIB family. FtsQ subfamily.

The protein resides in the cell inner membrane. Essential cell division protein. In Bradyrhizobium diazoefficiens (strain JCM 10833 / BCRC 13528 / IAM 13628 / NBRC 14792 / USDA 110), this protein is Cell division protein FtsQ.